A 202-amino-acid chain; its full sequence is Imidazoleglycerol-phosphate dehydratase (202 aa).

This sequence belongs to the imidazoleglycerol-phosphate dehydratase family.

The protein resides in the cytoplasm. The catalysed reaction is D-erythro-1-(imidazol-4-yl)glycerol 3-phosphate = 3-(imidazol-4-yl)-2-oxopropyl phosphate + H2O. It participates in amino-acid biosynthesis; L-histidine biosynthesis; L-histidine from 5-phospho-alpha-D-ribose 1-diphosphate: step 6/9. The sequence is that of Imidazoleglycerol-phosphate dehydratase from Synechococcus sp. (strain WH7803).